The sequence spans 641 residues: Threonine--tRNA ligase (641 aa).

In terms of domain architecture, TGS spans 1–61; sequence MPAITLPDGS…DDDVQLEIVT (61 aa). The catalytic stretch occupies residues 242 to 533; that stretch reads DHRRIGRAQN…LIEHYAGALP (292 aa). Zn(2+) contacts are provided by cysteine 333, histidine 384, and histidine 510.

It belongs to the class-II aminoacyl-tRNA synthetase family. As to quaternary structure, homodimer. The cofactor is Zn(2+).

It localises to the cytoplasm. The catalysed reaction is tRNA(Thr) + L-threonine + ATP = L-threonyl-tRNA(Thr) + AMP + diphosphate + H(+). Catalyzes the attachment of threonine to tRNA(Thr) in a two-step reaction: L-threonine is first activated by ATP to form Thr-AMP and then transferred to the acceptor end of tRNA(Thr). Also edits incorrectly charged L-seryl-tRNA(Thr). This chain is Threonine--tRNA ligase, found in Alkalilimnicola ehrlichii (strain ATCC BAA-1101 / DSM 17681 / MLHE-1).